The primary structure comprises 101 residues: Small ribosomal subunit protein uS10 (101 aa).

This sequence belongs to the universal ribosomal protein uS10 family. As to quaternary structure, part of the 30S ribosomal subunit.

In terms of biological role, involved in the binding of tRNA to the ribosomes. In Corynebacterium jeikeium (strain K411), this protein is Small ribosomal subunit protein uS10.